A 236-amino-acid chain; its full sequence is Cyclin-P3-1 (236 aa).

It belongs to the cyclin family. Cyclin U/P subfamily.

The polypeptide is Cyclin-P3-1 (CYCP3-1) (Oryza sativa subsp. japonica (Rice)).